Here is a 534-residue protein sequence, read N- to C-terminus: Glutamyl-tRNA(Gln) amidotransferase subunit B, mitochondrial (534 aa).

A mitochondrion-targeting transit peptide spans 1 to 28; the sequence is MTVLCRLRHCHLSTPTLCRRFHDARVYK.

This sequence belongs to the GatB/GatE family. GatB subfamily. Subunit of the heterotrimeric GatCAB amidotransferase (AdT) complex, composed of A, B and C subunits.

Its subcellular location is the mitochondrion. It catalyses the reaction L-glutamyl-tRNA(Gln) + L-glutamine + ATP + H2O = L-glutaminyl-tRNA(Gln) + L-glutamate + ADP + phosphate + H(+). Allows the formation of correctly charged Gln-tRNA(Gln) through the transamidation of misacylated Glu-tRNA(Gln) in the mitochondria. The reaction takes place in the presence of glutamine and ATP through an activated gamma-phospho-Glu-tRNA(Gln). The polypeptide is Glutamyl-tRNA(Gln) amidotransferase subunit B, mitochondrial (Laccaria bicolor (strain S238N-H82 / ATCC MYA-4686) (Bicoloured deceiver)).